We begin with the raw amino-acid sequence, 748 residues long: Chondroadherin-like protein (748 aa).

A signal peptide spans 1–29 (MERPQSSIWVFMLLLFMVLLQSPAWHVAA). Residues 30–61 (QRCPQTCVCDNSRRHVTCRHQNLTEVPNTIPE) form the LRRNT 1 domain. Asn-51 is a glycosylation site (N-linked (GlcNAc...) asparagine). LRR repeat units follow at residues 85–107 (PHLT…AFRG), 108–131 (LGRL…ALDG), 132–155 (LGSL…TFGA), 156–179 (LGSL…AFQG), 181–203 (LRTR…ALAG), 204–227 (LPAL…ALSQ), 229–252 (RSLA…GLAL), 253–275 (PGLR…AFAH), and 276–299 (CPRL…QVPG). In terms of domain architecture, LRRCT 1 spans 309–357 (NPLWCACHARPLLEWLVRARVRSDGACRGPRRLRGEALDTLRPSDLRCP). The tract at residues 352–389 (SDLRCPGDAAAGDGDGDEDEDRPAGPRAPPLRSPHGEA) is disordered. Positions 394–428 (PCPPACACVAETRHSTCDGRGLQAVPRGFPNDTQL) constitute an LRRNT 2 domain. A disulfide bridge connects residues Cys-395 and Cys-410. LRR repeat units follow at residues 423–446 (PNDT…AFPG), 448–470 (RHLV…ALAG), 471–494 (LDRL…ALEG), 496–518 (PNLG…ALRA), 519–542 (LPTL…DLAG), 544–566 (RALR…ALGP), 567–590 (AREL…ALEG), 591–614 (LPAL…AFQP), 616–639 (GRSL…AFSG), and 641–665 (GKGL…GLSG). The N-linked (GlcNAc...) asparagine glycan is linked to Asn-625. One can recognise an LRRCT 2 domain in the interval 674–722 (NPFHCDCQLLPLHRWLTGLNLRVGATCATPPSVRGQKVKVAAPVFEACP). Cystine bridges form between Cys-678–Cys-721 and Cys-680–Cys-700. Positions 728–748 (KAKRTPTSRGSARRTPSLSRH) are disordered. Over residues 734 to 748 (TSRGSARRTPSLSRH) the composition is skewed to polar residues.

The protein belongs to the small leucine-rich proteoglycan (SLRP) family. SLRP class IV subfamily. Associates with collagen and binds to collagen fibrils. As to expression, expressed in cartilage, including articular knee cartilage, where it localizes to the extracellular space in the area immediately surrounding the chondrocytes, not detected in any other tissues (at protein level).

The protein localises to the secreted. Its subcellular location is the extracellular space. It is found in the extracellular matrix. In terms of biological role, potential negative modulator of chondrocyte differentiation. Inhibits collagen fibrillogenesis in vitro. May influence chondrocyte's differentiation by acting on its cellular collagenous microenvironment. This chain is Chondroadherin-like protein (Chadl), found in Mus musculus (Mouse).